The following is a 426-amino-acid chain: MTLWVLGLNHQTAPVDLRERAAFAGDALPRALESLRALPQVSEAALLSTCNRTELYAMAEEAHSLVTWLETHAPALSGYLYQHQEAEAVRHLFRVATGLDSMVLGEPQILGQVKDAWAVARAHGTLGSGLDRLFQQTFSVAKRARTDTRVGANPVSVASTAVRLAQDSFARLNESTVLLIGAGETIELAAKHLSEGRVRRLLIANRTLAHAQTLASQHGGFALPLTDLERHLAEADVVFSATAAREPLVTRAQVEQALRARKRKPMLLFDLAVPRDIEASVGELSDAYLYTVDDLERAVEDNRRGRREAADQAEAIIDLQVARYVETLQANARQAPLKRLRAFGDSTRDELLAKARQQLHNGKPADEVLEQLAHALTNRLLHPPTAALRDAALNNDLELTTAADRLFPEKPGLPTSPHSYPDREDR.

Substrate-binding positions include 49-52 (TCNR), S101, 106-108 (EPQ), and Q112. The active-site Nucleophile is the C50. Position 181–186 (181–186 (GAGETI)) interacts with NADP(+). Positions 404 to 426 (DRLFPEKPGLPTSPHSYPDREDR) are disordered.

This sequence belongs to the glutamyl-tRNA reductase family. Homodimer.

It carries out the reaction (S)-4-amino-5-oxopentanoate + tRNA(Glu) + NADP(+) = L-glutamyl-tRNA(Glu) + NADPH + H(+). It participates in porphyrin-containing compound metabolism; protoporphyrin-IX biosynthesis; 5-aminolevulinate from L-glutamyl-tRNA(Glu): step 1/2. Its function is as follows. Catalyzes the NADPH-dependent reduction of glutamyl-tRNA(Glu) to glutamate 1-semialdehyde (GSA). The protein is Glutamyl-tRNA reductase of Xanthomonas campestris pv. phaseoli.